The following is a 290-amino-acid chain: MPNRGVVLLDGQALAYDIEKDLKNKIQTITAQTHKRPKLAVILVGKDPASITYVNMKIKACQRVGMDFDLKTLQEDITEAKLLSLIKDYNTDQNISGVLVQLPLPRHIDSKMVLEAIDPSKDVDGFHPLNIGKLCTQKESFLPATPMGVMRLLKHYHIEIKGKDVAIIGASNIIGKPLSMLMLNAGASVSVCHILTKDISFYTQNADIVCVGVGKPDLIKASMLKKGAVVVDIGINHLNDGRIVGDVDFNNAQKVAGFITPVPKGVGPMTIVSLLENTLIAFEKQQRKGF.

NADP(+)-binding positions include 169 to 171, isoleucine 194, and isoleucine 235; that span reads GAS.

This sequence belongs to the tetrahydrofolate dehydrogenase/cyclohydrolase family. In terms of assembly, homodimer.

It catalyses the reaction (6R)-5,10-methylene-5,6,7,8-tetrahydrofolate + NADP(+) = (6R)-5,10-methenyltetrahydrofolate + NADPH. It carries out the reaction (6R)-5,10-methenyltetrahydrofolate + H2O = (6R)-10-formyltetrahydrofolate + H(+). It functions in the pathway one-carbon metabolism; tetrahydrofolate interconversion. Its function is as follows. Catalyzes the oxidation of 5,10-methylenetetrahydrofolate to 5,10-methenyltetrahydrofolate and then the hydrolysis of 5,10-methenyltetrahydrofolate to 10-formyltetrahydrofolate. The protein is Bifunctional protein FolD of Helicobacter pylori (strain HPAG1).